A 93-amino-acid chain; its full sequence is Small ribosomal subunit protein uS19 (93 aa).

Belongs to the universal ribosomal protein uS19 family.

In terms of biological role, protein S19 forms a complex with S13 that binds strongly to the 16S ribosomal RNA. This chain is Small ribosomal subunit protein uS19, found in Dehalococcoides mccartyi (strain ATCC BAA-2100 / JCM 16839 / KCTC 5957 / BAV1).